A 163-amino-acid chain; its full sequence is Regulator of chromosome segregation (163 aa).

As to quaternary structure, interacts with CpsD and ParB.

It is found in the cytoplasm. The protein localises to the nucleoid. Its subcellular location is the cell membrane. Functionally, required for cell division and chromosome segregation. Binds to DNA and is involved in segregating the origin of replication (oriC) region to new daughter cells. When the nucleoid is not properly segregated, involved in blocking the cell division to protect the nucleoid against premature truncation by the newly forming septum, a function which is dependent on CpsD and its autophosphorylation level. In Streptococcus pneumoniae serotype 2 (strain D39 / NCTC 7466), this protein is Regulator of chromosome segregation.